The primary structure comprises 112 residues: Probable small nuclear ribonucleoprotein Sm D2 (112 aa).

Over residues 1 to 15 the composition is skewed to basic and acidic residues; it reads MSRMNDETMEDKPDD. A disordered region spans residues 1–23; sequence MSRMNDETMEDKPDDSNGPLSIL. Residues 20-106 enclose the Sm domain; that stretch reads LSILMDSVNN…VILVLKNPLG (87 aa).

This sequence belongs to the snRNP core protein family.

It is found in the nucleus. It localises to the cytoplasm. Its subcellular location is the cytosol. Plays a role in pre-mRNA splicing as a core component of the spliceosomal U1, U2, U4 and U5 small nuclear ribonucleoproteins (snRNPs), the building blocks of the spliceosome. The chain is Probable small nuclear ribonucleoprotein Sm D2 (snrpd2) from Dictyostelium discoideum (Social amoeba).